The sequence spans 60 residues: Cytochrome c oxidase subunit 9, mitochondrial (60 aa).

Topologically, residues 1 to 15 (MSAIAPITGTIRKRI) are mitochondrial matrix. The chain crosses the membrane as a helical span at residues 16 to 38 (LADITIGFAIGGAMASYWWWGFH). Topologically, residues 39-57 (KNIINKREAYYAKLAEQKA) are mitochondrial intermembrane. Residues 58–60 (AEN) constitute a propeptide, removed in mature form.

The protein belongs to the fungal cytochrome c oxidase subunit 7a family. As to quaternary structure, component of the cytochrome c oxidase (complex IV, CIV), a multisubunit enzyme composed of a catalytic core of 3 subunits and several supernumerary subunits. The complex exists as a monomer or a dimer and forms supercomplexes (SCs) in the inner mitochondrial membrane with ubiquinol-cytochrome c oxidoreductase (cytochrome b-c1 complex, complex III, CIII).

It is found in the mitochondrion inner membrane. It participates in energy metabolism; oxidative phosphorylation. Its function is as follows. Component of the cytochrome c oxidase, the last enzyme in the mitochondrial electron transport chain which drives oxidative phosphorylation. The respiratory chain contains 3 multisubunit complexes succinate dehydrogenase (complex II, CII), ubiquinol-cytochrome c oxidoreductase (cytochrome b-c1 complex, complex III, CIII) and cytochrome c oxidase (complex IV, CIV), that cooperate to transfer electrons derived from NADH and succinate to molecular oxygen, creating an electrochemical gradient over the inner membrane that drives transmembrane transport and the ATP synthase. Cytochrome c oxidase is the component of the respiratory chain that catalyzes the reduction of oxygen to water. Electrons originating from reduced cytochrome c in the intermembrane space (IMS) are transferred via the dinuclear copper A center (CU(A)) of subunit 2 and heme A of subunit 1 to the active site in subunit 1, a binuclear center (BNC) formed by heme A3 and copper B (CU(B)). The BNC reduces molecular oxygen to 2 water molecules using 4 electrons from cytochrome c in the IMS and 4 protons from the mitochondrial matrix. This Kluyveromyces lactis (strain ATCC 8585 / CBS 2359 / DSM 70799 / NBRC 1267 / NRRL Y-1140 / WM37) (Yeast) protein is Cytochrome c oxidase subunit 9, mitochondrial (COX9).